Consider the following 818-residue polypeptide: LPS-assembly protein LptD (818 aa).

An N-terminal signal peptide occupies residues 1 to 33 (MVNETMKHQFKFNPLATAIFTLLCSGSIQSSYA).

Belongs to the LptD family. As to quaternary structure, component of the lipopolysaccharide transport and assembly complex. Interacts with LptE and LptA.

It localises to the cell outer membrane. Functionally, together with LptE, is involved in the assembly of lipopolysaccharide (LPS) at the surface of the outer membrane. This is LPS-assembly protein LptD from Acinetobacter baumannii (strain ATCC 19606 / DSM 30007 / JCM 6841 / CCUG 19606 / CIP 70.34 / NBRC 109757 / NCIMB 12457 / NCTC 12156 / 81).